Consider the following 300-residue polypeptide: Enoyl-CoA hydratase domain-containing protein 3, mitochondrial (300 aa).

Residues 1 to 66 (MAVVAGLRAF…RNIVLSNPRR (66 aa)) constitute a mitochondrion transit peptide. The interval 34 to 53 (GSAGPAGSESEPRLTSTRQQ) is disordered. Lysine 110 carries the N6-succinyllysine modification.

It belongs to the enoyl-CoA hydratase/isomerase family.

Its subcellular location is the mitochondrion. Its function is as follows. May play a role in fatty acid biosynthesis and insulin sensitivity. This Mus musculus (Mouse) protein is Enoyl-CoA hydratase domain-containing protein 3, mitochondrial.